Reading from the N-terminus, the 413-residue chain is Imidazolonepropionase (413 aa).

Fe(3+) contacts are provided by His-70 and His-72. Zn(2+) contacts are provided by His-70 and His-72. 4-imidazolone-5-propanoate is bound by residues Arg-79, Tyr-142, and His-175. An N-formimidoyl-L-glutamate-binding site is contributed by Tyr-142. Residue His-240 participates in Fe(3+) binding. A Zn(2+)-binding site is contributed by His-240. Glu-243 contacts 4-imidazolone-5-propanoate. Position 315 (Asp-315) interacts with Fe(3+). Asp-315 contacts Zn(2+). The N-formimidoyl-L-glutamate site is built by Asn-317 and Gly-319. Ser-320 contributes to the 4-imidazolone-5-propanoate binding site.

The protein belongs to the metallo-dependent hydrolases superfamily. HutI family. Requires Zn(2+) as cofactor. The cofactor is Fe(3+).

Its subcellular location is the cytoplasm. It carries out the reaction 4-imidazolone-5-propanoate + H2O = N-formimidoyl-L-glutamate. It participates in amino-acid degradation; L-histidine degradation into L-glutamate; N-formimidoyl-L-glutamate from L-histidine: step 3/3. In terms of biological role, catalyzes the hydrolytic cleavage of the carbon-nitrogen bond in imidazolone-5-propanoate to yield N-formimidoyl-L-glutamate. It is the third step in the universal histidine degradation pathway. The polypeptide is Imidazolonepropionase (Treponema denticola (strain ATCC 35405 / DSM 14222 / CIP 103919 / JCM 8153 / KCTC 15104)).